Here is a 421-residue protein sequence, read N- to C-terminus: ATP-dependent RNA helicase RhlB (421 aa).

The Q motif motif lies at 9-37; the sequence is QKFSDFALHPKVVEALEKKGFHNCTPIQA. A Helicase ATP-binding domain is found at 40-219; sequence LPLTLAGRDV…FEQMNNAEYI (180 aa). An ATP-binding site is contributed by 53–60; it reads AQTGTGKT. Residues 165 to 168 carry the DEAD box motif; the sequence is DEAD. Residues 245–390 enclose the Helicase C-terminal domain; the sequence is RLLQTLIEEE…VSKYNPDALM (146 aa). Positions 392–421 are disordered; the sequence is DLPKPLRLTRPRTGNGPRRTGTPRNRRRSG. The segment covering 402–414 has biased composition (low complexity); the sequence is PRTGNGPRRTGTP.

The protein belongs to the DEAD box helicase family. RhlB subfamily. As to quaternary structure, component of the RNA degradosome, which is a multiprotein complex involved in RNA processing and mRNA degradation.

The protein localises to the cytoplasm. The enzyme catalyses ATP + H2O = ADP + phosphate + H(+). Functionally, DEAD-box RNA helicase involved in RNA degradation. Has RNA-dependent ATPase activity and unwinds double-stranded RNA. In Escherichia coli O7:K1 (strain IAI39 / ExPEC), this protein is ATP-dependent RNA helicase RhlB.